Here is a 608-residue protein sequence, read N- to C-terminus: Growth hormone receptor (608 aa).

Positions 1–16 (MDLRHLLFTLALVCAN) are cleaved as a signal peptide. Topologically, residues 17–237 (DSLSASDDLL…EFVHCAEEIE (221 aa)) are extracellular. 2 disulfide bridges follow: Cys-34–Cys-44 and Cys-72–Cys-83. Asn-86 carries N-linked (GlcNAc...) asparagine glycosylation. Cys-97 and Cys-111 are disulfide-bonded. Residues 122 to 226 (PPVHLNWTLL…ILYVSFTQAG (105 aa)) enclose the Fibronectin type-III domain. N-linked (GlcNAc...) asparagine glycans are attached at residues Asn-127, Asn-132, and Asn-171. A WSXWS motif motif is present at residues 211–215 (FGEFS). A helical transmembrane segment spans residues 238-261 (FPWFLVVVFGVCGLAVTAILILLS). The Cytoplasmic segment spans residues 262 to 608 (KQPRLKMLIF…STDQLNKIMP (347 aa)). The segment at 267–352 (KMLIFPPVPV…HLKSHSCLGA (86 aa)) is required for JAK2 binding. The Box 1 motif motif lies at 270 to 278 (IFPPVPVPK). Residues 313-322 (DLWVEFIELD) carry the UbE motif motif. 2 stretches are compositionally biased toward polar residues: residues 413 to 426 (ANTD…STQS) and 438 to 451 (STDS…TQLS). Residues 413 to 451 (ANTDTQQPHTSTQSESRESWPPFADSTDSANPSVQTQLS) are disordered.

The protein belongs to the type I cytokine receptor family. Type 1 subfamily. Post-translationally, on GH binding, proteolytically cleaved, in vitro, to produce GHBP. Broad specificity.

The protein resides in the cell membrane. It is found in the secreted. Functionally, receptor for pituitary gland growth hormone (GH1) involved in regulating postnatal body growth. On ligand binding, couples to the JAK2/STAT5 pathway. Its function is as follows. The soluble form (GHBP) acts as a reservoir of growth hormone in plasma and may be a modulator/inhibitor of GH signaling. This Gallus gallus (Chicken) protein is Growth hormone receptor (GHR).